The sequence spans 249 residues: Exosome complex component Rrp41 (249 aa).

This sequence belongs to the RNase PH family. Rrp41 subfamily. Component of the archaeal exosome complex. Forms a hexameric ring-like arrangement composed of 3 Rrp41-Rrp42 heterodimers. The hexameric ring associates with a trimer of Rrp4 and/or Csl4 subunits.

Its subcellular location is the cytoplasm. In terms of biological role, catalytic component of the exosome, which is a complex involved in RNA degradation. Has 3'-&gt;5' exoribonuclease activity. Can also synthesize heteromeric RNA-tails. The chain is Exosome complex component Rrp41 from Thermococcus kodakarensis (strain ATCC BAA-918 / JCM 12380 / KOD1) (Pyrococcus kodakaraensis (strain KOD1)).